Reading from the N-terminus, the 334-residue chain is Ventral anterior homeobox 1 (334 aa).

Over residues 1-34 (MFGKPDKMDVRCHSDAEAARVSKNAHKESRESKG) the composition is skewed to basic and acidic residues. A disordered region spans residues 1 to 41 (MFGKPDKMDVRCHSDAEAARVSKNAHKESRESKGAEGNLPA). Residues 100–159 (PKRTRTSFTAEQLYRLEMEFQRCQYVVGRERTELARQLNLSETQVKVWFQNRRTKQKKDQ) constitute a DNA-binding region (homeobox). Disordered stretches follow at residues 234–263 (PGPA…GLHA) and 314–334 (SAFE…KALD). Residues 323-334 (NNKEGAEKKALD) are compositionally biased toward basic and acidic residues.

Belongs to the EMX homeobox family.

It is found in the nucleus. Transcription factor that may function in dorsoventral specification of the forebrain. Required for axon guidance and major tract formation in the developing forebrain. May contribute to the differentiation of the neuroretina, pigmented epithelium and optic stalk. The sequence is that of Ventral anterior homeobox 1 (VAX1) from Homo sapiens (Human).